Consider the following 428-residue polypeptide: 3-phosphoshikimate 1-carboxyvinyltransferase (428 aa).

Positions 22, 23, and 27 each coordinate 3-phosphoshikimate. A phosphoenolpyruvate-binding site is contributed by Lys22. Phosphoenolpyruvate contacts are provided by Gly96 and Arg124. 3-phosphoshikimate is bound by residues Ser170, Ser171, Gln172, Ser198, Asp314, Asn337, and Lys341. Gln172 lines the phosphoenolpyruvate pocket. Catalysis depends on Asp314, which acts as the Proton acceptor. 3 residues coordinate phosphoenolpyruvate: Arg345, Arg387, and Lys412.

Belongs to the EPSP synthase family. Monomer.

Its subcellular location is the cytoplasm. It carries out the reaction 3-phosphoshikimate + phosphoenolpyruvate = 5-O-(1-carboxyvinyl)-3-phosphoshikimate + phosphate. Its pathway is metabolic intermediate biosynthesis; chorismate biosynthesis; chorismate from D-erythrose 4-phosphate and phosphoenolpyruvate: step 6/7. In terms of biological role, catalyzes the transfer of the enolpyruvyl moiety of phosphoenolpyruvate (PEP) to the 5-hydroxyl of shikimate-3-phosphate (S3P) to produce enolpyruvyl shikimate-3-phosphate and inorganic phosphate. The protein is 3-phosphoshikimate 1-carboxyvinyltransferase of Shewanella amazonensis (strain ATCC BAA-1098 / SB2B).